The primary structure comprises 154 residues: MHCPFCSAHDTKVIDSRLVAEGDQVRRRRECQACGERFTTFETAELVMPRVIKQDGSRQPFDEDKLRAGMQRALEKRPVSVERLEAAIGRIKHELRATGEREVKSRVLGELVMAELRKLDEVAYIRFASVYRRFQDLNEFREEIERLSREPSKP.

The segment at 3–34 is a zinc-finger region; that stretch reads CPFCSAHDTKVIDSRLVAEGDQVRRRRECQAC. The region spanning 49–139 is the ATP-cone domain; the sequence is PRVIKQDGSR…VYRRFQDLNE (91 aa).

Belongs to the NrdR family. The cofactor is Zn(2+).

Functionally, negatively regulates transcription of bacterial ribonucleotide reductase nrd genes and operons by binding to NrdR-boxes. This chain is Transcriptional repressor NrdR, found in Azotobacter vinelandii (strain DJ / ATCC BAA-1303).